The primary structure comprises 150 residues: Cdc42 effector protein 5 (150 aa).

3 disordered regions span residues 1–20 (MPVMKQLGPAQPKKRLDRGA), 34–89 (LHVG…PADP), and 114–133 (SETTATKPDGDAHPRVQHPK). Residues 23-37 (ISAPLGDFRHTLHVG) enclose the CRIB domain. Arg-38 carries the post-translational modification Omega-N-methylarginine. 2 stretches are compositionally biased toward pro residues: residues 55–66 (GPPPEPGAPPVV) and 74–87 (PAAPQPPVAVPSPA). A compositionally biased stretch (basic and acidic residues) spans 114–127 (SETTATKPDGDAHP).

Belongs to the BORG/CEP family. In terms of assembly, interacts with CDC42 in a GTP-dependent manner, and with SEPT7. In terms of tissue distribution, highly expressed in the skeletal muscle.

The protein resides in the endomembrane system. Its subcellular location is the cytoplasm. It localises to the cytoskeleton. Probably involved in the organization of the actin cytoskeleton. May act downstream of CDC42 to induce actin filament assembly leading to cell shape changes. Induces pseudopodia formation in fibroblasts. Inhibits MAPK8 independently of CDC42 binding. Controls septin organization and this effect is negatively regulated by CDC42. The chain is Cdc42 effector protein 5 (Cdc42ep5) from Mus musculus (Mouse).